The sequence spans 309 residues: Probable manganese-dependent inorganic pyrophosphatase (309 aa).

His-9, Asp-13, Asp-15, Asp-75, His-97, and Asp-149 together coordinate Mn(2+).

Belongs to the PPase class C family. Mn(2+) is required as a cofactor.

It is found in the cytoplasm. The enzyme catalyses diphosphate + H2O = 2 phosphate + H(+). In Bacillus cereus (strain AH187), this protein is Probable manganese-dependent inorganic pyrophosphatase.